Here is a 311-residue protein sequence, read N- to C-terminus: Phosphopantothenate--cysteine ligase (311 aa).

Ala-2 carries the N-acetylalanine modification.

It belongs to the PPC synthetase family. As to quaternary structure, homodimer.

The enzyme catalyses (R)-4'-phosphopantothenate + L-cysteine + ATP = N-[(R)-4-phosphopantothenoyl]-L-cysteine + AMP + diphosphate + H(+). It catalyses the reaction (R)-4'-phosphopantothenate + L-cysteine + CTP = N-[(R)-4-phosphopantothenoyl]-L-cysteine + CMP + diphosphate + H(+). Its pathway is cofactor biosynthesis; coenzyme A biosynthesis; CoA from (R)-pantothenate: step 2/5. Functionally, catalyzes the second step in the biosynthesis of coenzyme A from vitamin B5, where cysteine is conjugated to 4'-phosphopantothenate to form 4-phosphopantothenoylcysteine. Has a preference for ATP over CTP as a cosubstrate. The sequence is that of Phosphopantothenate--cysteine ligase (Ppcs) from Mus musculus (Mouse).